We begin with the raw amino-acid sequence, 251 residues long: Cell division protein ZapD (251 aa).

Belongs to the ZapD family. As to quaternary structure, interacts with FtsZ.

It is found in the cytoplasm. Functionally, cell division factor that enhances FtsZ-ring assembly. Directly interacts with FtsZ and promotes bundling of FtsZ protofilaments, with a reduction in FtsZ GTPase activity. This is Cell division protein ZapD from Burkholderia mallei (strain NCTC 10247).